The following is an 89-amino-acid chain: Small ribosomal subunit protein uS14 (89 aa).

This sequence belongs to the universal ribosomal protein uS14 family. As to quaternary structure, part of the 30S ribosomal subunit. Contacts proteins S3 and S10.

Its function is as follows. Binds 16S rRNA, required for the assembly of 30S particles and may also be responsible for determining the conformation of the 16S rRNA at the A site. This chain is Small ribosomal subunit protein uS14, found in Onion yellows phytoplasma (strain OY-M).